The chain runs to 41 residues: Photosystem II reaction center protein L (41 aa).

Residues 20–40 (SLYLGLLLVFVVGILFSSYFF) form a helical membrane-spanning segment.

The protein belongs to the PsbL family. As to quaternary structure, PSII is composed of 1 copy each of membrane proteins PsbA, PsbB, PsbC, PsbD, PsbE, PsbF, PsbH, PsbI, PsbJ, PsbK, PsbL, PsbM, PsbT, PsbX, PsbY, PsbZ, Psb30/Ycf12, peripheral proteins PsbO, CyanoQ (PsbQ), PsbU, PsbV and a large number of cofactors. It forms dimeric complexes.

Its subcellular location is the cellular thylakoid membrane. Functionally, one of the components of the core complex of photosystem II (PSII). PSII is a light-driven water:plastoquinone oxidoreductase that uses light energy to abstract electrons from H(2)O, generating O(2) and a proton gradient subsequently used for ATP formation. It consists of a core antenna complex that captures photons, and an electron transfer chain that converts photonic excitation into a charge separation. This subunit is found at the monomer-monomer interface and is required for correct PSII assembly and/or dimerization. The polypeptide is Photosystem II reaction center protein L (Trichodesmium erythraeum (strain IMS101)).